The sequence spans 72 residues: Large ribosomal subunit protein uL29 (72 aa).

Belongs to the universal ribosomal protein uL29 family.

The sequence is that of Large ribosomal subunit protein uL29 from Prochlorococcus marinus (strain MIT 9215).